The sequence spans 354 residues: NADH-quinone oxidoreductase subunit H (354 aa).

The next 8 membrane-spanning stretches (helical) occupy residues 25–45, 91–111, 126–146, 170–190, 205–225, 257–277, 290–310, and 330–350; these read LVRI…LILW, WVYL…WAVI, LLYA…AGWA, MGFA…SDIV, FLSW…VSGI, LFFL…SILF, FIPG…VFIW, and VFLP…MSPL.

This sequence belongs to the complex I subunit 1 family. In terms of assembly, NDH-1 is composed of 14 different subunits. Subunits NuoA, H, J, K, L, M, N constitute the membrane sector of the complex.

Its subcellular location is the cell inner membrane. The catalysed reaction is a quinone + NADH + 5 H(+)(in) = a quinol + NAD(+) + 4 H(+)(out). NDH-1 shuttles electrons from NADH, via FMN and iron-sulfur (Fe-S) centers, to quinones in the respiratory chain. The immediate electron acceptor for the enzyme in this species is believed to be ubiquinone. Couples the redox reaction to proton translocation (for every two electrons transferred, four hydrogen ions are translocated across the cytoplasmic membrane), and thus conserves the redox energy in a proton gradient. This subunit may bind ubiquinone. This is NADH-quinone oxidoreductase subunit H from Paraburkholderia phymatum (strain DSM 17167 / CIP 108236 / LMG 21445 / STM815) (Burkholderia phymatum).